The sequence spans 123 residues: Large ribosomal subunit protein bL12 (123 aa).

It belongs to the bacterial ribosomal protein bL12 family. In terms of assembly, homodimer. Part of the ribosomal stalk of the 50S ribosomal subunit. Forms a multimeric L10(L12)X complex, where L10 forms an elongated spine to which 2 to 4 L12 dimers bind in a sequential fashion. Binds GTP-bound translation factors.

Its function is as follows. Forms part of the ribosomal stalk which helps the ribosome interact with GTP-bound translation factors. Is thus essential for accurate translation. The chain is Large ribosomal subunit protein bL12 from Psychrobacter arcticus (strain DSM 17307 / VKM B-2377 / 273-4).